The primary structure comprises 264 residues: Phosphate import ATP-binding protein PstB 1 (264 aa).

In terms of domain architecture, ABC transporter spans 20–259 (LETRDLNIFY…PKIKLTEDYI (240 aa)). Residue 52–59 (GASGSGKS) coordinates ATP.

This sequence belongs to the ABC transporter superfamily. Phosphate importer (TC 3.A.1.7) family. As to quaternary structure, the complex is composed of two ATP-binding proteins (PstB), two transmembrane proteins (PstC and PstA) and a solute-binding protein (PstS).

Its subcellular location is the cell membrane. The catalysed reaction is phosphate(out) + ATP + H2O = ADP + 2 phosphate(in) + H(+). In terms of biological role, part of the ABC transporter complex PstSACB involved in phosphate import. Responsible for energy coupling to the transport system. This Ligilactobacillus salivarius (strain UCC118) (Lactobacillus salivarius) protein is Phosphate import ATP-binding protein PstB 1.